The chain runs to 103 residues: Large ribosomal subunit protein uL24 (103 aa).

It belongs to the universal ribosomal protein uL24 family. Part of the 50S ribosomal subunit.

Its function is as follows. One of two assembly initiator proteins, it binds directly to the 5'-end of the 23S rRNA, where it nucleates assembly of the 50S subunit. Functionally, one of the proteins that surrounds the polypeptide exit tunnel on the outside of the subunit. The protein is Large ribosomal subunit protein uL24 of Bacillus mycoides (strain KBAB4) (Bacillus weihenstephanensis).